Reading from the N-terminus, the 46-residue chain is Defensin-like protein AX2 (46 aa).

Disulfide bonds link Cys3-Cys46, Cys14-Cys34, Cys20-Cys40, and Cys24-Cys42.

As to expression, leaves and flowers.

Strong inhibiting activity against C.beticola and other filamentous fungi. Little or no effect against bacteria. The chain is Defensin-like protein AX2 from Beta vulgaris (Sugar beet).